A 201-amino-acid chain; its full sequence is High mobility group protein homolog 068R (201 aa).

2 consecutive DNA-binding regions (HMG box) follow at residues 70 to 138 (PKRN…ELEK) and 143 to 201 (TPSK…KAAK).

The protein belongs to the IIV-6 401R family.

It localises to the host nucleus. In Invertebrate iridescent virus 3 (IIV-3), this protein is High mobility group protein homolog 068R.